The primary structure comprises 310 residues: Aspartate carbamoyltransferase catalytic subunit 2 (310 aa).

2 residues coordinate carbamoyl phosphate: Arg55 and Thr56. Lys85 contributes to the L-aspartate binding site. Residues Arg106, His134, and Gln137 each coordinate carbamoyl phosphate. L-aspartate-binding residues include Arg167 and Arg228. Carbamoyl phosphate is bound by residues Leu266 and Pro267.

It belongs to the aspartate/ornithine carbamoyltransferase superfamily. ATCase family. Heterododecamer (2C3:3R2) of six catalytic PyrB chains organized as two trimers (C3), and six regulatory PyrI chains organized as three dimers (R2).

It catalyses the reaction carbamoyl phosphate + L-aspartate = N-carbamoyl-L-aspartate + phosphate + H(+). The protein operates within pyrimidine metabolism; UMP biosynthesis via de novo pathway; (S)-dihydroorotate from bicarbonate: step 2/3. In terms of biological role, catalyzes the condensation of carbamoyl phosphate and aspartate to form carbamoyl aspartate and inorganic phosphate, the committed step in the de novo pyrimidine nucleotide biosynthesis pathway. In Shewanella halifaxensis (strain HAW-EB4), this protein is Aspartate carbamoyltransferase catalytic subunit 2.